Reading from the N-terminus, the 280-residue chain is MMVSFTARANSNILAYRLLAYSEGDDIIEISHAAENTIPDYVAVKDVDKGDLTQVNMYPLAAWQVIAGSDIKVGDNLTTGKDGTAVPTDDPSVVFGYAVEEAQEGQLVTLIISRSKEISIEVDDIKDAGDTGKRLLKINTPSGARNIIIENEDAKALINGETTNTNKKNLQDLLFSDGNVKAFLQANTTDENKAALQQLMVSNADVLGLLSGAPSSENKVNIRSMIGAGVPYTLPAATTTTIGGVKKGAAVSASTATDVTNAVKDLNSLITVLKNAGIIS.

Belongs to the phi29likevirus major capsid fiber protein family. In terms of assembly, homotrimer. Forms a super helix coiled coil in the homotrimer.

The protein localises to the virion. Functionally, protein that forms the 55 capsid fibers. These fibers are not always present and may have been lost in some lab strains. They may enhance the attachment of the virions onto the host cell wall. This is Capsid fiber protein (8.5) from Bacillus subtilis (Bacteriophage PZA).